The chain runs to 180 residues: Small ribosomal subunit protein eS10y (180 aa).

The segment at 92-180 is disordered; that stretch reads LKKQQKPLGR…GGGAAGSDLP (89 aa). Residues 108–128 show a composition bias toward basic and acidic residues; that stretch reads DRPRGPPRGDGERRFGDRDGY. Over residues 152–180 the composition is skewed to gly residues; it reads FRGGAGGARQGFGRGAGGFGGGAAGSDLP.

It belongs to the eukaryotic ribosomal protein eS10 family.

It is found in the cytoplasm. This Arabidopsis thaliana (Mouse-ear cress) protein is Small ribosomal subunit protein eS10y (RPS10B).